A 610-amino-acid polypeptide reads, in one-letter code: Elongation factor 4 (610 aa).

The tr-type G domain maps to E11–S193. GTP contacts are provided by residues D23 to T28 and N140 to D143.

Belongs to the TRAFAC class translation factor GTPase superfamily. Classic translation factor GTPase family. LepA subfamily.

The protein resides in the cell membrane. The enzyme catalyses GTP + H2O = GDP + phosphate + H(+). Required for accurate and efficient protein synthesis under certain stress conditions. May act as a fidelity factor of the translation reaction, by catalyzing a one-codon backward translocation of tRNAs on improperly translocated ribosomes. Back-translocation proceeds from a post-translocation (POST) complex to a pre-translocation (PRE) complex, thus giving elongation factor G a second chance to translocate the tRNAs correctly. Binds to ribosomes in a GTP-dependent manner. The polypeptide is Elongation factor 4 (Streptococcus equi subsp. equi (strain 4047)).